The following is a 452-amino-acid chain: Peptidase M20 domain-containing protein SMAC_03666.2 (452 aa).

Positions 1 to 28 are cleaved as a signal peptide; sequence MKATSNLLLLWGTSLLSPSSAFVIDNHH. Asn-140 is a glycosylation site (N-linked (GlcNAc...) asparagine). Asp-186 contacts Zn(2+). Catalysis depends on Glu-220, which acts as the Proton acceptor. Glu-221 serves as a coordination point for Zn(2+). N-linked (GlcNAc...) asparagine glycosylation is present at Asn-315.

The protein belongs to the peptidase M20A family. It depends on Zn(2+) as a cofactor.

It localises to the secreted. The protein is Peptidase M20 domain-containing protein SMAC_03666.2 of Sordaria macrospora (strain ATCC MYA-333 / DSM 997 / K(L3346) / K-hell).